The following is a 353-amino-acid chain: UDP-N-acetylglucosamine--N-acetylmuramyl-(pentapeptide) pyrophosphoryl-undecaprenol N-acetylglucosamine transferase (353 aa).

UDP-N-acetyl-alpha-D-glucosamine is bound by residues 10–12, asparagine 124, serine 183, and glutamine 283; that span reads TGG.

This sequence belongs to the glycosyltransferase 28 family. MurG subfamily.

It is found in the cell inner membrane. The enzyme catalyses di-trans,octa-cis-undecaprenyl diphospho-N-acetyl-alpha-D-muramoyl-L-alanyl-D-glutamyl-meso-2,6-diaminopimeloyl-D-alanyl-D-alanine + UDP-N-acetyl-alpha-D-glucosamine = di-trans,octa-cis-undecaprenyl diphospho-[N-acetyl-alpha-D-glucosaminyl-(1-&gt;4)]-N-acetyl-alpha-D-muramoyl-L-alanyl-D-glutamyl-meso-2,6-diaminopimeloyl-D-alanyl-D-alanine + UDP + H(+). The protein operates within cell wall biogenesis; peptidoglycan biosynthesis. Functionally, cell wall formation. Catalyzes the transfer of a GlcNAc subunit on undecaprenyl-pyrophosphoryl-MurNAc-pentapeptide (lipid intermediate I) to form undecaprenyl-pyrophosphoryl-MurNAc-(pentapeptide)GlcNAc (lipid intermediate II). The polypeptide is UDP-N-acetylglucosamine--N-acetylmuramyl-(pentapeptide) pyrophosphoryl-undecaprenol N-acetylglucosamine transferase (Helicobacter pylori (strain ATCC 700392 / 26695) (Campylobacter pylori)).